Consider the following 328-residue polypeptide: Putative gluconeogenesis factor (328 aa).

The protein belongs to the gluconeogenesis factor family.

The protein localises to the cytoplasm. Its function is as follows. Required for morphogenesis under gluconeogenic growth conditions. In Aquifex aeolicus (strain VF5), this protein is Putative gluconeogenesis factor.